The chain runs to 463 residues: Asparagine--tRNA ligase (463 aa).

It belongs to the class-II aminoacyl-tRNA synthetase family. Homodimer.

The protein resides in the cytoplasm. It catalyses the reaction tRNA(Asn) + L-asparagine + ATP = L-asparaginyl-tRNA(Asn) + AMP + diphosphate + H(+). The polypeptide is Asparagine--tRNA ligase (Alkaliphilus oremlandii (strain OhILAs) (Clostridium oremlandii (strain OhILAs))).